Here is a 319-residue protein sequence, read N- to C-terminus: Methionyl-tRNA formyltransferase (319 aa).

113–116 (SLLP) is a binding site for (6S)-5,6,7,8-tetrahydrofolate.

It belongs to the Fmt family.

It carries out the reaction L-methionyl-tRNA(fMet) + (6R)-10-formyltetrahydrofolate = N-formyl-L-methionyl-tRNA(fMet) + (6S)-5,6,7,8-tetrahydrofolate + H(+). Its function is as follows. Attaches a formyl group to the free amino group of methionyl-tRNA(fMet). The formyl group appears to play a dual role in the initiator identity of N-formylmethionyl-tRNA by promoting its recognition by IF2 and preventing the misappropriation of this tRNA by the elongation apparatus. This Pseudomonas fluorescens (strain ATCC BAA-477 / NRRL B-23932 / Pf-5) protein is Methionyl-tRNA formyltransferase.